The primary structure comprises 752 residues: Mitochondrial Rho GTPase 1 (752 aa).

Topologically, residues 1-671 (MRKDVRIVLA…RNALSYGTNR (671 aa)) are cytoplasmic. The 169-residue stretch at 2 to 170 (RKDVRIVLAG…FYFAQKAVLY (169 aa)) folds into the Miro 1 domain. GTP contacts are provided by residues 11–18 (GDPDVGKS), 57–61 (DTSSS), and 115–118 (NKID). 2 EF-hand domains span residues 186 to 221 (ACVD…CFDT) and 333 to 368 (NGYQ…APDN). Ca(2+)-binding residues include Asp-199, Asp-201, Asp-203, Glu-210, Asp-346, Asp-348, Asp-350, and Glu-357. The interval 426–460 (SSGSASTPAPIPLTPTGPPGSRPSRNRTPCPPSTI) is disordered. Residues 434–446 (APIPLTPTGPPGS) are compositionally biased toward pro residues. In terms of domain architecture, Miro 2 spans 481–651 (RSVFLGFVLG…YGLICTIAVD (171 aa)). Residues 490 to 497 (GAAGSGKT), 526 to 530 (EQAGA), and 595 to 598 (TKAD) contribute to the GTP site. A helical; Anchor for type IV membrane protein transmembrane segment spans residues 672 to 692 (WQFWGYIGLVVIGGGGAVWIC). Residues 693–752 (AKVLKVPIGSTLGFGSSASTTSWWLSGAQARGAGGPNATKVSSWFDWIRWQSSSNVRSEL) lie on the Mitochondrial intermembrane side of the membrane.

It belongs to the mitochondrial Rho GTPase family.

It is found in the mitochondrion outer membrane. Its function is as follows. Mitochondrial GTPase involved in mitochondrial trafficking. Probably involved in control of anterograde transport of mitochondria and their subcellular distribution. In Mycosarcoma maydis (Corn smut fungus), this protein is Mitochondrial Rho GTPase 1 (GEM1).